The following is an 804-amino-acid chain: DEP domain-containing protein 1A (804 aa).

In terms of domain architecture, DEP spans 24–108; the sequence is FRVGMPLRKH…DNNQLFRFPA (85 aa). The region spanning 282 to 322 is the Rho-GAP domain; the sequence is DYFLNLPEPLLTFEYYELFVNILVVCGYITVSDRTSGIHKI. S513 carries the post-translational modification Phosphoserine. The tract at residues 592–647 is interaction with ZNF224; that stretch reads AINALQLCCLLLPPPNRRKLQLLMRMISRMSQNVDMPKLHEQIGTRSLMINTFSRC. A coiled-coil region spans residues 726 to 760; sequence EQKISTSQAAIAELLENIVRSKSLSLKEKRRKLKQ.

Can form dimers. Interacts with ZNF224.

It localises to the nucleus. May be involved in transcriptional regulation as a transcriptional corepressor. The DEPDC1A-ZNF224 complex may play a critical role in bladder carcinogenesis by repressing the transcription of the A20 gene, leading to transport of NF-KB protein into the nucleus, resulting in suppression of apoptosis of bladder cancer cells. The polypeptide is DEP domain-containing protein 1A (Depdc1a) (Mus musculus (Mouse)).